Consider the following 269-residue polypeptide: Thiazole synthase (269 aa).

Residue Lys109 is the Schiff-base intermediate with DXP of the active site. 1-deoxy-D-xylulose 5-phosphate-binding positions include Gly170, 196 to 197, and 218 to 219; these read AG and NT.

Belongs to the ThiG family. Homotetramer. Forms heterodimers with either ThiH or ThiS.

The protein localises to the plastid. Its subcellular location is the chloroplast. It carries out the reaction [ThiS sulfur-carrier protein]-C-terminal-Gly-aminoethanethioate + 2-iminoacetate + 1-deoxy-D-xylulose 5-phosphate = [ThiS sulfur-carrier protein]-C-terminal Gly-Gly + 2-[(2R,5Z)-2-carboxy-4-methylthiazol-5(2H)-ylidene]ethyl phosphate + 2 H2O + H(+). It functions in the pathway cofactor biosynthesis; thiamine diphosphate biosynthesis. Its function is as follows. Catalyzes the rearrangement of 1-deoxy-D-xylulose 5-phosphate (DXP) to produce the thiazole phosphate moiety of thiamine. Sulfur is provided by the thiocarboxylate moiety of the carrier protein ThiS. In vitro, sulfur can be provided by H(2)S. The chain is Thiazole synthase from Phaeodactylum tricornutum (strain CCAP 1055/1).